We begin with the raw amino-acid sequence, 149 residues long: MSVMITILNGPNLNFLGQREPKIYGTETLEDIEKNCREWAKRADVIINFYQSNYEGQLVEWIQEAIGLSSGLIINPAAYSHTSVALLDALKMFSGPKVEVHLSHIYRREAFRHHSYTSIGVDAIISGCGSDGYRFALEYIAKQLINCKR.

The Proton acceptor role is filled by Y24. Substrate is bound by residues N75, H81, and D88. The active-site Proton donor is H101. Substrate-binding positions include 102–103 and R112; that span reads LS.

The protein belongs to the type-II 3-dehydroquinase family. As to quaternary structure, homododecamer.

The enzyme catalyses 3-dehydroquinate = 3-dehydroshikimate + H2O. It participates in metabolic intermediate biosynthesis; chorismate biosynthesis; chorismate from D-erythrose 4-phosphate and phosphoenolpyruvate: step 3/7. Its function is as follows. Catalyzes a trans-dehydration via an enolate intermediate. The chain is 3-dehydroquinate dehydratase from Bartonella tribocorum (strain CIP 105476 / IBS 506).